The sequence spans 469 residues: MKTAKDVLKSIKDNDVKYVDLRFTDPRGKWQHVTFDVSMIDEDIFAEGTMFDGSSIAGWKAINESDMCLMPDPVTATIDPFFAETTMVITCDVLEPTTGEPYNRDPRGIAKKAEAMVKSMGVGDTVFVGPEAEFFVFDDVRFSSSPYNTGFRLDSSELPTNTDTEYEGGNLGHRVRTKGGYFPVPPQDSVQDMRSEMLGAMAKMGVKVEKHHHEVASAQHELGMKFDTLTLMADHLQIYKYCIHQVAHIYGKTATFMPKPVYGDNGSGMHVHQSIWKDGKPVFAGNKYADLSETCLHYIGGIIKHAKAINAFTNPSTNSYKRLVPGYEAPVLLAYSARNRSASCRIPYTASPKAKRVEVRFPDPLANPYLGFAAMLMAGLDGIKNKIDPGPAMDKDLYDLPKEELKQIPTVCGSLREALENLDKDRAFLKAGGVFDDDFIDSYIELKMTEVERFEMTPHPVEFDMYYSG.

Residues 14–98 (NDVKYVDLRF…ITCDVLEPTT (85 aa)) form the GS beta-grasp domain. Residues 106-469 (PRGIAKKAEA…PVEFDMYYSG (364 aa)) enclose the GS catalytic domain. Mg(2+)-binding residues include E131 and E133. Position 209 (E209) interacts with ATP. Residues E214 and E221 each coordinate Mg(2+). Residues 265-266 (NG) and G266 each bind L-glutamate. H270 contributes to the Mg(2+) binding site. ATP contacts are provided by residues 272-274 (HQS) and S274. 3 residues coordinate L-glutamate: R322, E328, and R340. The ATP site is built by R340, R345, and K353. E358 contributes to the Mg(2+) binding site. R360 contributes to the L-glutamate binding site. The residue at position 398 (Y398) is an O-AMP-tyrosine.

The protein belongs to the glutamine synthetase family. As to quaternary structure, oligomer of 12 subunits arranged in the form of two hexameric ring. The cofactor is Mg(2+).

The protein resides in the cytoplasm. It carries out the reaction L-glutamate + NH4(+) + ATP = L-glutamine + ADP + phosphate + H(+). With respect to regulation, the activity of this enzyme could be controlled by adenylation under conditions of abundant glutamine. In terms of biological role, catalyzes the ATP-dependent biosynthesis of glutamine from glutamate and ammonia. This chain is Glutamine synthetase, found in Bradyrhizobium diazoefficiens (strain JCM 10833 / BCRC 13528 / IAM 13628 / NBRC 14792 / USDA 110).